A 166-amino-acid polypeptide reads, in one-letter code: Large ribosomal subunit protein mL41 (166 aa).

The N-terminal 26 residues, 1 to 26 (MNNCIKVVPIALRCQQRTISTSSVLE), are a transit peptide targeting the mitochondrion. Residues 136 to 166 (KDGSAKEPSVNEQLTPEEALQRARKTGSDIF) are disordered.

It belongs to the mitochondrion-specific ribosomal protein mL41 family. Component of the mitochondrial ribosome large subunit (39S) which comprises a 16S rRNA and about 50 distinct proteins.

It is found in the mitochondrion. The chain is Large ribosomal subunit protein mL41 (mRpL41) from Drosophila melanogaster (Fruit fly).